Here is a 142-residue protein sequence, read N- to C-terminus: MKTFSAKSHEVVHEWFVIDATDKVLGRVASEVALRLRGKHKPEYTPHVDTGDFIVVINSSKLRVTGTKGLNKIYYRHSGYPGGISSTNFDKMQDRFPGRALEKAVKGMLPKGPLGYAMIKKLKVYGDANHPHAAQQPKALEI.

This sequence belongs to the universal ribosomal protein uL13 family. In terms of assembly, part of the 50S ribosomal subunit.

Its function is as follows. This protein is one of the early assembly proteins of the 50S ribosomal subunit, although it is not seen to bind rRNA by itself. It is important during the early stages of 50S assembly. In Polynucleobacter asymbioticus (strain DSM 18221 / CIP 109841 / QLW-P1DMWA-1) (Polynucleobacter necessarius subsp. asymbioticus), this protein is Large ribosomal subunit protein uL13.